Reading from the N-terminus, the 222-residue chain is Small ribosomal subunit protein eS1 (222 aa).

It belongs to the eukaryotic ribosomal protein eS1 family.

In Pyrobaculum islandicum (strain DSM 4184 / JCM 9189 / GEO3), this protein is Small ribosomal subunit protein eS1.